The following is a 210-amino-acid chain: Histone H1A (210 aa).

2 disordered regions span residues 1-49 (MAEA…VSEQ) and 101-210 (KGSG…PKKK). Composition is skewed to low complexity over residues 26 to 45 (KKAA…SGPS) and 129 to 142 (PLAA…AAAK). Residues 42–113 (SGPSVSEQIV…GASGSFKLNK (72 aa)) enclose the H15 domain. 2 stretches are compositionally biased toward basic residues: residues 143–153 (KTAKSPKKPKK) and 160–180 (SPKK…KTAV). A compositionally biased stretch (low complexity) spans 181–192 (KPKVAAKSPAKA). A compositionally biased stretch (basic residues) spans 193–210 (KAAKPKVAKAKKAAPKKK).

Belongs to the histone H1/H5 family.

The protein resides in the nucleus. The protein localises to the chromosome. Histones H1 are necessary for the condensation of nucleosome chains into higher-order structures. The polypeptide is Histone H1A (Xenopus laevis (African clawed frog)).